The following is a 50-amino-acid chain: Putative protein HokG (50 aa).

The chain crosses the membrane as a helical span at residues 5 to 25 (YALVAIIVLCCTVLGFTLMVG).

The protein belongs to the Hok/Gef family.

Its subcellular location is the cell inner membrane. Its function is as follows. Toxic component of a type I toxin-antitoxin (TA) system. When overexpressed kills cells within minutes; causes collapse of the transmembrane potential and arrest of respiration. Its toxic effect is probably neutralized by an antisense antitoxin Sok RNA. This is Putative protein HokG (hokG) from Escherichia coli O157:H7.